Here is an 887-residue protein sequence, read N- to C-terminus: ATP-dependent DNA helicase srs2 (887 aa).

Residues 9–304 (KFLNEEQRIS…LHLERNYRSA (296 aa)) form the UvrD-like helicase ATP-binding domain. Residues 33–38 (GSGKTR) and Arg-302 each bind ATP. A UvrD-like helicase C-terminal domain is found at 305–597 (KPILELALSI…TISTLHAAKG (293 aa)).

The protein belongs to the helicase family. UvrD subfamily.

Its subcellular location is the nucleus. The catalysed reaction is Couples ATP hydrolysis with the unwinding of duplex DNA by translocating in the 3'-5' direction.. The enzyme catalyses ATP + H2O = ADP + phosphate + H(+). Its function is as follows. ATP-dependent DNA helicase involved in DNA repair at least for UV-induced lesions. Also aids the recombinational repair of camptothecin-induced collapsed replication forks. This is ATP-dependent DNA helicase srs2 (srs2) from Schizosaccharomyces pombe (strain 972 / ATCC 24843) (Fission yeast).